The following is a 383-amino-acid chain: MSWQNKIDLGLQQRHEAAAYRCRQVNDGANGRWLQTGAQQYLNFSSNDYLGLSQDAAVIAAWQQGAQRYGVGSGGSGHVTGYSLPHAQLEQQLADWLGYPRALLFISGFAANQAVLTALTAADDRILADKLSHASLLEAATHSPAQLRRFAHNQPDSLQKLLNKPCSGQTLVVTEGVFSMDGDSAPLAAIQQHTAAAGGWLLVDDAHGLGVRGAAGRGSCELQGVKPELLVVTFSKAFGLSGAAVLCQEPVAEYLLQYARHLIYSTAMPPAQACALQAALLRIQQGDDLRQRLQQRITQFRCGAAALPLQLGASETAIQPLLVGDNQQTVALAEQLRAAGLWVTAIRPPTVPPGGARLRITLSAAHESEDIDRLLEVLHGVCH.

Arg-21 is a binding site for substrate. Position 108–109 (108–109 (GF)) interacts with pyridoxal 5'-phosphate. His-133 is a binding site for substrate. Residues Ser-179, His-207, and Thr-233 each coordinate pyridoxal 5'-phosphate. N6-(pyridoxal phosphate)lysine is present on Lys-236. Thr-350 contributes to the substrate binding site.

The protein belongs to the class-II pyridoxal-phosphate-dependent aminotransferase family. BioF subfamily. Homodimer. The cofactor is pyridoxal 5'-phosphate.

The catalysed reaction is 6-carboxyhexanoyl-[ACP] + L-alanine + H(+) = (8S)-8-amino-7-oxononanoate + holo-[ACP] + CO2. It functions in the pathway cofactor biosynthesis; biotin biosynthesis. Its function is as follows. Catalyzes the decarboxylative condensation of pimeloyl-[acyl-carrier protein] and L-alanine to produce 8-amino-7-oxononanoate (AON), [acyl-carrier protein], and carbon dioxide. This is 8-amino-7-oxononanoate synthase from Yersinia enterocolitica serotype O:8 / biotype 1B (strain NCTC 13174 / 8081).